The chain runs to 1134 residues: Protocadherin 18 (1134 aa).

Residues 1 to 27 (MHQMNTKMHFRFALALLMAFFSHDVLA) form the signal peptide. 6 consecutive Cadherin domains span residues 28 to 137 (KNLK…SPQF), 138 to 246 (SRPV…SPAF), 247 to 354 (EQPS…KPEI), 361 to 465 (PGKE…PPRF), 466 to 576 (QRSR…VPVV), and 582 to 688 (HNNT…STAM). The Extracellular segment spans residues 28–699 (KNLKYRIYEE…SVSRASLDVS (672 aa)). Asparagine 103 is a glycosylation site (N-linked (GlcNAc...) asparagine). N-linked (GlcNAc...) asparagine glycosylation occurs at asparagine 269. Asparagine 559 is a glycosylation site (N-linked (GlcNAc...) asparagine). The chain crosses the membrane as a helical span at residues 700 to 720 (MIIIISLGAICAVLLVIMVLF). Over 721–1134 (ATRCNREKKD…NKLLQDVRQS (414 aa)) the chain is Cytoplasmic. Disordered regions lie at residues 769 to 800 (LPIRSHHRSSPSSSPTLERGQMGSRQSHNSHQ), 868 to 888 (SLKDSGRGDSEAGDSDYDLGR), 941 to 1004 (DYRS…SSLL), and 1022 to 1083 (FSEC…PSSK). Residues 791–800 (GSRQSHNSHQ) show a composition bias toward polar residues. Residues 868 to 877 (SLKDSGRGDS) show a composition bias toward basic and acidic residues. Positions 892 to 1134 (IDRLLGEGFS…NKLLQDVRQS (243 aa)) are interaction with DAB1. A compositionally biased stretch (basic and acidic residues) spans 1027-1038 (EGDRSNSLERRK). A compositionally biased stretch (polar residues) spans 1059–1082 (THFQNPTSSSGTPLGTHSSVQPSS).

In terms of assembly, interacts with DAB1. Predominantly expressed in kidney and lung.

The protein localises to the cell membrane. Potential calcium-dependent cell-adhesion protein. The sequence is that of Protocadherin 18 (Pcdh18) from Mus musculus (Mouse).